We begin with the raw amino-acid sequence, 293 residues long: uncharacterized protein (293 aa).

Residues 65 to 89 are a coiled coil; it reads LQKYLENIKNKKLNLNKQSNNQTNN. Residues 81–112 form a disordered region; that stretch reads KQSNNQTNNQTNNQTNNQTNNQTNNIRPQINN.

The protein localises to the virion. This is an uncharacterized protein from Acanthamoeba polyphaga mimivirus (APMV).